Consider the following 400-residue polypeptide: Chorismate synthase (400 aa).

NADP(+) is bound by residues R40 and R46. FMN contacts are provided by residues 135–137 (RAS), 257–258 (QA), G301, 316–320 (KPIST), and R342.

The protein belongs to the chorismate synthase family. Homotetramer. FMNH2 is required as a cofactor.

It carries out the reaction 5-O-(1-carboxyvinyl)-3-phosphoshikimate = chorismate + phosphate. Its pathway is metabolic intermediate biosynthesis; chorismate biosynthesis; chorismate from D-erythrose 4-phosphate and phosphoenolpyruvate: step 7/7. Catalyzes the anti-1,4-elimination of the C-3 phosphate and the C-6 proR hydrogen from 5-enolpyruvylshikimate-3-phosphate (EPSP) to yield chorismate, which is the branch point compound that serves as the starting substrate for the three terminal pathways of aromatic amino acid biosynthesis. This reaction introduces a second double bond into the aromatic ring system. The sequence is that of Chorismate synthase from Tropheryma whipplei (strain TW08/27) (Whipple's bacillus).